Consider the following 150-residue polypeptide: Ribosomal RNA large subunit methyltransferase H (150 aa).

Residues Leu-68, Gly-97, and 116–121 (LSAMTL) each bind S-adenosyl-L-methionine.

It belongs to the RNA methyltransferase RlmH family. Homodimer.

It is found in the cytoplasm. It carries out the reaction pseudouridine(1915) in 23S rRNA + S-adenosyl-L-methionine = N(3)-methylpseudouridine(1915) in 23S rRNA + S-adenosyl-L-homocysteine + H(+). Functionally, specifically methylates the pseudouridine at position 1915 (m3Psi1915) in 23S rRNA. The chain is Ribosomal RNA large subunit methyltransferase H from Prochlorococcus marinus (strain MIT 9303).